The chain runs to 346 residues: Phosphoribosylformylglycinamidine cyclo-ligase (346 aa).

Belongs to the AIR synthase family.

It localises to the cytoplasm. The catalysed reaction is 2-formamido-N(1)-(5-O-phospho-beta-D-ribosyl)acetamidine + ATP = 5-amino-1-(5-phospho-beta-D-ribosyl)imidazole + ADP + phosphate + H(+). The protein operates within purine metabolism; IMP biosynthesis via de novo pathway; 5-amino-1-(5-phospho-D-ribosyl)imidazole from N(2)-formyl-N(1)-(5-phospho-D-ribosyl)glycinamide: step 2/2. The protein is Phosphoribosylformylglycinamidine cyclo-ligase of Bacillus cereus (strain G9842).